The sequence spans 84 residues: Small ribosomal subunit protein uS17 (84 aa).

The protein belongs to the universal ribosomal protein uS17 family. In terms of assembly, part of the 30S ribosomal subunit.

In terms of biological role, one of the primary rRNA binding proteins, it binds specifically to the 5'-end of 16S ribosomal RNA. The polypeptide is Small ribosomal subunit protein uS17 (Borrelia duttonii (strain Ly)).